The sequence spans 173 residues: Protein GrpE (173 aa).

Residues 1-28 (MTEEEKTKSEAEEIEQNNKEEEQEKSVE) show a composition bias toward basic and acidic residues. The segment at 1 to 30 (MTEEEKTKSEAEEIEQNNKEEEQEKSVEEL) is disordered.

This sequence belongs to the GrpE family. In terms of assembly, homodimer.

Its subcellular location is the cytoplasm. Functionally, participates actively in the response to hyperosmotic and heat shock by preventing the aggregation of stress-denatured proteins, in association with DnaK and GrpE. It is the nucleotide exchange factor for DnaK and may function as a thermosensor. Unfolded proteins bind initially to DnaJ; upon interaction with the DnaJ-bound protein, DnaK hydrolyzes its bound ATP, resulting in the formation of a stable complex. GrpE releases ADP from DnaK; ATP binding to DnaK triggers the release of the substrate protein, thus completing the reaction cycle. Several rounds of ATP-dependent interactions between DnaJ, DnaK and GrpE are required for fully efficient folding. The polypeptide is Protein GrpE (Methanosphaera stadtmanae (strain ATCC 43021 / DSM 3091 / JCM 11832 / MCB-3)).